The chain runs to 296 residues: 33 kDa chaperonin (296 aa).

2 disulfide bridges follow: Cys-237–Cys-239 and Cys-270–Cys-273.

The protein belongs to the HSP33 family. Under oxidizing conditions two disulfide bonds are formed involving the reactive cysteines. Under reducing conditions zinc is bound to the reactive cysteines and the protein is inactive.

It localises to the cytoplasm. Functionally, redox regulated molecular chaperone. Protects both thermally unfolding and oxidatively damaged proteins from irreversible aggregation. Plays an important role in the bacterial defense system toward oxidative stress. The chain is 33 kDa chaperonin from Acetivibrio thermocellus (strain ATCC 27405 / DSM 1237 / JCM 9322 / NBRC 103400 / NCIMB 10682 / NRRL B-4536 / VPI 7372) (Clostridium thermocellum).